A 454-amino-acid chain; its full sequence is MLRERIKKFHFIGIGGIGMSGIAQILLEMGYKVSGSDISENKNTKLLKQKGAKIYIGHRPENLGDAQVVVYSSAVKPDNPEIQEAKRRNIPVIPRGEMLAELFKLKEGIAVSGSHGKTTTTSMIAEILINAGLEPTVIIGGRLKRLGTNAKLGRGELLVSEADESDGSFLKLQPAVAVITNVDKEHLDFYENFERVKEAFEQFMNSVPFYGFAVVNLDDPTLAQLVKKSHERVITYGINSPALVRAKNLYLKEGRYEFGVEFKGKELGRIHLGIAGIHNVYNALAATGVALELGVSFEVIKKSLEEFRNAERRLELKGYYKNSPVYDDYGHHPTEIKAVINSLRDMYPDKNLLVVFQPHRYSRTYYLFEDFVKVLKDIDKLIVTDIYPASENNVYGVSAEELARKSGAVFAKDKEEVFEKVREVHDEGDVILFLGAGSISKWCEEFLKEVNLEK.

113–119 (GSHGKTT) contacts ATP.

This sequence belongs to the MurCDEF family.

It localises to the cytoplasm. The catalysed reaction is UDP-N-acetyl-alpha-D-muramate + L-alanine + ATP = UDP-N-acetyl-alpha-D-muramoyl-L-alanine + ADP + phosphate + H(+). It participates in cell wall biogenesis; peptidoglycan biosynthesis. In terms of biological role, cell wall formation. The chain is UDP-N-acetylmuramate--L-alanine ligase from Aquifex aeolicus (strain VF5).